A 211-amino-acid polypeptide reads, in one-letter code: Large ribosomal subunit protein uL4 (211 aa).

Residues 41–53 (QAHSRQGTASTLT) show a composition bias toward polar residues. Positions 41-78 (QAHSRQGTASTLTRAEVRGGGRKPYKQKGTGRARQGTI) are disordered. Residues 60 to 71 (GGRKPYKQKGTG) show a composition bias toward basic residues.

The protein belongs to the universal ribosomal protein uL4 family. As to quaternary structure, part of the 50S ribosomal subunit.

In terms of biological role, one of the primary rRNA binding proteins, this protein initially binds near the 5'-end of the 23S rRNA. It is important during the early stages of 50S assembly. It makes multiple contacts with different domains of the 23S rRNA in the assembled 50S subunit and ribosome. Its function is as follows. Forms part of the polypeptide exit tunnel. The protein is Large ribosomal subunit protein uL4 of Prochlorococcus marinus (strain MIT 9313).